The sequence spans 78 residues: Consomatin Nc1 (78 aa).

The N-terminal stretch at 1–22 (MQTAYWVMVMVMVWITAPLSEG) is a signal peptide. Positions 23–59 (GKPNDVIRGLVPDDLTPQLILRSLISRRRSDKDVGKR) are excised as a propeptide. Position 61 is a 4-carboxyglutamate (Glu61). Cysteines 62 and 67 form a disulfide. D-tryptophan is present on Trp64. 4-hydroxyproline is present on Pro70. Positions 71-78 (LSRRHDLG) are excised as a propeptide.

Belongs to the conotoxin C superfamily. Consomatin family. In terms of tissue distribution, expressed by the venom duct.

The protein localises to the secreted. Functionally, moderately activates human somatostatin receptors (SSTR) with a preferential activation of SSTR1 and SSTR4. In vivo, does not cause behavioral changes in mice within a few minutes of intracranial injection, but causes a progressive loss of movement thereafter. Four to five hours after injection, mice recover, even with the highest dose tested. Shows antinociception and antihyperalgesia activities in two mouse models of acute pain, most probably by acting outside the central nervous system. In Conus neocostatus (Cone snail), this protein is Consomatin Nc1.